A 173-amino-acid polypeptide reads, in one-letter code: Mitochondrial holo-[acyl-carrier-protein] synthase (173 aa).

The protein belongs to the P-Pant transferase superfamily. AcpS family.

The protein resides in the mitochondrion. It catalyses the reaction apo-[ACP] + CoA = holo-[ACP] + adenosine 3',5'-bisphosphate + H(+). Functionally, transfers the 4'-phosphopantetheine moiety from coenzyme A to a Ser of mitochondrial acyl-carrier-protein. In Saccharomyces cerevisiae (strain ATCC 204508 / S288c) (Baker's yeast), this protein is Mitochondrial holo-[acyl-carrier-protein] synthase (PPT2).